The sequence spans 209 residues: MSRIWDISQPLHAAVPVWPGEPAFSLHSHAVIGEGCPVNVGGMFTPLHAGTHGDAPLHYSNDGASSADCELAPYIGPCALIDVRHARGRVEIGDIDWSCVDGAERVLLRTYEQFPHEKWDSDFTAVAADVIERFGAMGVRLIGTDAASLDPEQSKTLDAHQAVKAADMRILEGLVLDDVPPGRYELIALPLRIVGADASPVRAILREIA.

Position 18 (Trp-18) interacts with substrate. Zn(2+) contacts are provided by His-48, His-52, and Asp-54. The active-site Proton donor/acceptor is the His-58. His-160 and Glu-172 together coordinate Zn(2+).

This sequence belongs to the Cyclase 1 superfamily. KynB family. As to quaternary structure, homodimer. Requires Zn(2+) as cofactor.

The enzyme catalyses N-formyl-L-kynurenine + H2O = L-kynurenine + formate + H(+). Its pathway is amino-acid degradation; L-tryptophan degradation via kynurenine pathway; L-kynurenine from L-tryptophan: step 2/2. In terms of biological role, catalyzes the hydrolysis of N-formyl-L-kynurenine to L-kynurenine, the second step in the kynurenine pathway of tryptophan degradation. In Sphingopyxis alaskensis (strain DSM 13593 / LMG 18877 / RB2256) (Sphingomonas alaskensis), this protein is Kynurenine formamidase.